The primary structure comprises 498 residues: Glycerol kinase (498 aa).

Residue Thr-14 coordinates ADP. ATP is bound by residues Thr-14, Thr-15, and Ser-16. Residue Thr-14 coordinates sn-glycerol 3-phosphate. Residue Arg-18 participates in ADP binding. Sn-glycerol 3-phosphate-binding residues include Arg-84, Glu-85, Tyr-136, and Asp-245. Arg-84, Glu-85, Tyr-136, Asp-245, and Gln-246 together coordinate glycerol. ADP-binding residues include Thr-267 and Gly-310. 4 residues coordinate ATP: Thr-267, Gly-310, Gln-314, and Gly-410. Residues Gly-410 and Asn-414 each contribute to the ADP site.

This sequence belongs to the FGGY kinase family.

It carries out the reaction glycerol + ATP = sn-glycerol 3-phosphate + ADP + H(+). It functions in the pathway polyol metabolism; glycerol degradation via glycerol kinase pathway; sn-glycerol 3-phosphate from glycerol: step 1/1. Its activity is regulated as follows. Inhibited by fructose 1,6-bisphosphate (FBP). Its function is as follows. Key enzyme in the regulation of glycerol uptake and metabolism. Catalyzes the phosphorylation of glycerol to yield sn-glycerol 3-phosphate. The sequence is that of Glycerol kinase from Rhodospirillum centenum (strain ATCC 51521 / SW).